Consider the following 721-residue polypeptide: Vacuolar transporter chaperone complex subunit 4 (721 aa).

Residues methionine 1–alanine 146 enclose the SPX domain. Over methionine 1 to tyrosine 631 the chain is Cytoplasmic. 7 residues coordinate ATP: lysine 198, arginine 262, arginine 264, lysine 279, lysine 292, tyrosine 357, and arginine 359. Glutamate 421 is a Mn(2+) binding site. The active site involves lysine 453. Polar residues-rich tracts occupy residues glutamine 490–threonine 513 and isoleucine 529–phenylalanine 547. The disordered stretch occupies residues glutamine 490–phenylalanine 547. A Phosphoserine modification is found at serine 495. Threonine 497 bears the Phosphothreonine mark. At serine 501 the chain carries Phosphoserine. Threonine 534 bears the Phosphothreonine mark. Serine 546 bears the Phosphoserine mark. Residues leucine 632–alanine 652 traverse the membrane as a helical segment. Topologically, residues lysine 653–glycine 657 are vacuolar. Residues isoleucine 658–leucine 678 form a helical membrane-spanning segment. Over tyrosine 679–arginine 697 the chain is Cytoplasmic. A helical transmembrane segment spans residues phenylalanine 698 to asparagine 718. Over phenylalanine 719–alanine 721 the chain is Vacuolar.

Belongs to the VTC4 family. In terms of assembly, the VTC core complex is an integral membrane heterooligomer composed of at least the catalytic subunit vtc4 and the accessory subunits vtc1 and vtc2. vtc1 is a small membrane protein without hydrophilic domain. Vtc2 and vtc4 are related and have 2 hydrophilic domains that face the cytosol, an N-terminal SPX domain and the central core domain. The central core in vtc4 is the catalytic domain. Requires Mn(2+) as cofactor.

Its subcellular location is the vacuole membrane. It catalyses the reaction [phosphate](n) + ATP = [phosphate](n+1) + ADP. With respect to regulation, activity of the enzyme is Mn(2+)-dependent and enhanced in the presence of pyrophosphate (PPi). In terms of biological role, catalytic subunit of the vacuolar transporter chaperone (VTC) complex. The VTC complex acts as a vacuolar polyphosphate polymerase that catalyzes the synthesis of inorganic polyphosphate (polyP) via transfer of phosphate from ATP to a growing polyP chain, releasing ADP. VTC exposes its catalytic domain vtc4 to the cytosol, where the growing polyP chain winds through a tunnel-shaped pocket, integrating cytoplasmic polymer synthesis with polyP membrane translocation. The VTC complex carries 9 vacuolar transmembrane domains, which are likely to constitute the translocation channel into the organelle lumen. PolyP synthesis is tightly coupled to its transport into the vacuole lumen, in order to avoid otherwise toxic intermediates in the cytosol, and it depends on the proton gradient across the membrane, formed by V-ATPase. The VTC complex also plays a role in vacuolar membrane fusion. The polypeptide is Vacuolar transporter chaperone complex subunit 4 (vtc4) (Schizosaccharomyces pombe (strain 972 / ATCC 24843) (Fission yeast)).